The sequence spans 242 residues: Beta-carotene ketolase (242 aa).

The catalysed reaction is all-trans-beta-carotene + 2 AH2 + 2 O2 = echinenone + 2 A + 3 H2O. The enzyme catalyses echinenone + 2 AH2 + 2 O2 = canthaxanthin + 2 A + 3 H2O. The protein operates within carotenoid biosynthesis; astaxanthin biosynthesis. Its function is as follows. Converts beta-carotene to canthaxanthin via echinenone. In Paracoccus sp. (strain N81106 / MBIC 01143) (Agrobacterium aurantiacum), this protein is Beta-carotene ketolase (crtW).